The chain runs to 547 residues: Chaperonin GroEL (547 aa).

Residues 30–33 (TLGP), Lys51, 87–91 (DGTTT), Gly415, 479–481 (NAA), and Asp495 contribute to the ATP site.

Belongs to the chaperonin (HSP60) family. In terms of assembly, forms a cylinder of 14 subunits composed of two heptameric rings stacked back-to-back. Interacts with the co-chaperonin GroES.

It is found in the cytoplasm. It carries out the reaction ATP + H2O + a folded polypeptide = ADP + phosphate + an unfolded polypeptide.. In terms of biological role, together with its co-chaperonin GroES, plays an essential role in assisting protein folding. The GroEL-GroES system forms a nano-cage that allows encapsulation of the non-native substrate proteins and provides a physical environment optimized to promote and accelerate protein folding. The polypeptide is Chaperonin GroEL (Pseudomonas savastanoi pv. phaseolicola (strain 1448A / Race 6) (Pseudomonas syringae pv. phaseolicola (strain 1448A / Race 6))).